Reading from the N-terminus, the 65-residue chain is Large ribosomal subunit protein bL35 (65 aa).

Residues 1–16 (MPKMKTKSGAKKRFRV) show a composition bias toward basic residues. The segment at 1–25 (MPKMKTKSGAKKRFRVRPGGTVKRG) is disordered.

This sequence belongs to the bacterial ribosomal protein bL35 family.

In Herminiimonas arsenicoxydans, this protein is Large ribosomal subunit protein bL35.